The chain runs to 301 residues: Glycine--tRNA ligase alpha subunit (301 aa).

The protein belongs to the class-II aminoacyl-tRNA synthetase family. As to quaternary structure, tetramer of two alpha and two beta subunits.

The protein resides in the cytoplasm. The enzyme catalyses tRNA(Gly) + glycine + ATP = glycyl-tRNA(Gly) + AMP + diphosphate. The polypeptide is Glycine--tRNA ligase alpha subunit (Shewanella frigidimarina (strain NCIMB 400)).